The chain runs to 248 residues: Ribonuclease PH (248 aa).

Phosphate is bound by residues R86 and 124-126; that span reads GTR.

The protein belongs to the RNase PH family. As to quaternary structure, homohexameric ring arranged as a trimer of dimers.

It carries out the reaction tRNA(n+1) + phosphate = tRNA(n) + a ribonucleoside 5'-diphosphate. Phosphorolytic 3'-5' exoribonuclease that plays an important role in tRNA 3'-end maturation. Removes nucleotide residues following the 3'-CCA terminus of tRNAs; can also add nucleotides to the ends of RNA molecules by using nucleoside diphosphates as substrates, but this may not be physiologically important. Probably plays a role in initiation of 16S rRNA degradation (leading to ribosome degradation) during starvation. The chain is Ribonuclease PH from Listeria innocua serovar 6a (strain ATCC BAA-680 / CLIP 11262).